We begin with the raw amino-acid sequence, 512 residues long: Inositol-3-phosphate synthase (512 aa).

Residues G72, G73, N74, N75, D145, I182, Q192, R195, T232, G233, N234, T235, G283, S284, D308, S311, N342, N343, D344, K357, G395, D396, D424, and S425 each coordinate NAD(+).

It belongs to the myo-inositol 1-phosphate synthase family. NAD(+) serves as cofactor.

It is found in the cytoplasm. The protein localises to the cytosol. Its subcellular location is the nucleus. The catalysed reaction is D-glucose 6-phosphate = 1D-myo-inositol 3-phosphate. It functions in the pathway polyol metabolism; myo-inositol biosynthesis; myo-inositol from D-glucose 6-phosphate: step 1/2. Functionally, key enzyme in myo-inositol biosynthesis pathway that catalyzes the conversion of glucose 6-phosphate to 1-myo-inositol 1-phosphate in a NAD-dependent manner. The chain is Inositol-3-phosphate synthase from Mesembryanthemum crystallinum (Common ice plant).